The following is a 234-amino-acid chain: GTP:AMP phosphotransferase, mitochondrial (234 aa).

Residue 24 to 29 (GSGKGT) coordinates GTP. The tract at residues 45–74 (SSGDILRQEIKSESTLGREATTYIAQGKLL) is NMP. AMP-binding positions include S46, R51, 72 to 74 (KLL), 103 to 106 (GFPR), and Q110. The LID stretch occupies residues 144–181 (NRYVHVPSGRVYNLQYNPPKVPGLDDITGEPLTKRLDD). GTP contacts are provided by residues R145 and 154–155 (VY). Positions 178 and 189 each coordinate AMP. Residue S218 participates in GTP binding.

Belongs to the adenylate kinase family. AK3 subfamily. As to quaternary structure, monomer.

The protein resides in the mitochondrion matrix. The enzyme catalyses a ribonucleoside 5'-triphosphate + AMP = a ribonucleoside 5'-diphosphate + ADP. Involved in maintaining the homeostasis of cellular nucleotides by catalyzing the interconversion of nucleoside phosphates. Has GTP:AMP phosphotransferase and ITP:AMP phosphotransferase activities. Does not accept ATP as phosphate donor. The chain is GTP:AMP phosphotransferase, mitochondrial from Saccharomyces cerevisiae (Baker's yeast).